A 213-amino-acid chain; its full sequence is 3-isopropylmalate dehydratase small subunit (213 aa).

It belongs to the LeuD family. LeuD type 1 subfamily. As to quaternary structure, heterodimer of LeuC and LeuD.

It carries out the reaction (2R,3S)-3-isopropylmalate = (2S)-2-isopropylmalate. It participates in amino-acid biosynthesis; L-leucine biosynthesis; L-leucine from 3-methyl-2-oxobutanoate: step 2/4. Catalyzes the isomerization between 2-isopropylmalate and 3-isopropylmalate, via the formation of 2-isopropylmaleate. This chain is 3-isopropylmalate dehydratase small subunit, found in Neisseria gonorrhoeae (strain ATCC 700825 / FA 1090).